We begin with the raw amino-acid sequence, 48 residues long: Sperm protamine P1 (48 aa).

It belongs to the protamine P1 family. As to expression, testis.

It is found in the nucleus. The protein resides in the chromosome. Its function is as follows. Protamines substitute for histones in the chromatin of sperm during the haploid phase of spermatogenesis. They compact sperm DNA into a highly condensed, stable and inactive complex. The polypeptide is Sperm protamine P1 (PRM1) (Monophyllus redmani (Greater Antillean long-tongued bat)).